Consider the following 178-residue polypeptide: Protein GrpE (178 aa).

2 stretches are compositionally biased toward basic and acidic residues: residues 1–19 (MAKHKQEEHPEDVEVKEEA) and 30–42 (SPEKSELELANER). Residues 1–42 (MAKHKQEEHPEDVEVKEEAVETAEQAESASPEKSELELANER) form a disordered region.

This sequence belongs to the GrpE family. As to quaternary structure, homodimer.

Its subcellular location is the cytoplasm. Functionally, participates actively in the response to hyperosmotic and heat shock by preventing the aggregation of stress-denatured proteins, in association with DnaK and GrpE. It is the nucleotide exchange factor for DnaK and may function as a thermosensor. Unfolded proteins bind initially to DnaJ; upon interaction with the DnaJ-bound protein, DnaK hydrolyzes its bound ATP, resulting in the formation of a stable complex. GrpE releases ADP from DnaK; ATP binding to DnaK triggers the release of the substrate protein, thus completing the reaction cycle. Several rounds of ATP-dependent interactions between DnaJ, DnaK and GrpE are required for fully efficient folding. The sequence is that of Protein GrpE from Streptococcus sanguinis (strain SK36).